Here is a 331-residue protein sequence, read N- to C-terminus: MTRMKNSSSNVTSASGSGSGSGGFVQPLPASLLQPICHPRVTEVTSEVNDYFLTHWDFPSEKLRKKFVAADFPGVTCLYFPNALDDRISFACRLLTVLFLIDDLLEFMSLEQGSAYNEKLIPISRGDVLPDRSVPVEYITYDLWESMRGHDRSMANEILEPVFVFMRAQTDRTRIRPMGLGSYLEYRERDVGKALLAALMRFSMALHVSPVELTILGEIDVNCSKHLSVINDVYSYEKELRASKTAHAEGGALCTSVRILADEMAISIEAAKRVLVFMCREWELRHQVLVEELRADGRQSASLTAYVKGLEFQMSGNEEWSKTTLRYNNVV.

Positions 1–22 are disordered; that stretch reads MTRMKNSSSNVTSASGSGSGSG. The segment covering 7 to 16 has biased composition (low complexity); sequence SSSNVTSASG. Asp-102, Asn-231, Ser-235, and Glu-239 together coordinate Mg(2+). The short motif at 102–106 is the DDxx(x)D/E motif element; it reads DDLLE. The NDxxSxxxD/E motif motif lies at 231–239; sequence NDVYSYEKE. (2E,6E)-farnesyl diphosphate contacts are provided by Arg-326 and Tyr-327.

This sequence belongs to the terpene synthase family. Homodimer. Mg(2+) serves as cofactor.

The enzyme catalyses (2E,6E)-farnesyl diphosphate = (+)-aristolochene + diphosphate. Its pathway is sesquiterpene biosynthesis; aristolochene biosynthesis; aristolochene from farnesyl diphosphate: step 1/1. In terms of biological role, catalyzes the cyclization of trans,trans-farnesyl diphosphate (FPP) to the bicyclic sesquiterpene aristolochene. Aristolochene is the likely parent compound for a number of sesquiterpenoid toxins produced by filamentous fungi. This Penicillium expansum (Blue mold rot fungus) protein is (+)-aristolochene synthase TS1.